The primary structure comprises 954 residues: Glycine dehydrogenase (decarboxylating) (954 aa).

Lys704 carries the post-translational modification N6-(pyridoxal phosphate)lysine.

This sequence belongs to the GcvP family. As to quaternary structure, the glycine cleavage system is composed of four proteins: P, T, L and H. Pyridoxal 5'-phosphate is required as a cofactor.

It carries out the reaction N(6)-[(R)-lipoyl]-L-lysyl-[glycine-cleavage complex H protein] + glycine + H(+) = N(6)-[(R)-S(8)-aminomethyldihydrolipoyl]-L-lysyl-[glycine-cleavage complex H protein] + CO2. In terms of biological role, the glycine cleavage system catalyzes the degradation of glycine. The P protein binds the alpha-amino group of glycine through its pyridoxal phosphate cofactor; CO(2) is released and the remaining methylamine moiety is then transferred to the lipoamide cofactor of the H protein. This is Glycine dehydrogenase (decarboxylating) from Rhizobium johnstonii (strain DSM 114642 / LMG 32736 / 3841) (Rhizobium leguminosarum bv. viciae).